Here is a 304-residue protein sequence, read N- to C-terminus: Probable 5-dehydro-4-deoxyglucarate dehydratase (304 aa).

The protein belongs to the DapA family.

The enzyme catalyses 5-dehydro-4-deoxy-D-glucarate + H(+) = 2,5-dioxopentanoate + CO2 + H2O. Its pathway is carbohydrate acid metabolism; D-glucarate degradation; 2,5-dioxopentanoate from D-glucarate: step 2/2. The protein is Probable 5-dehydro-4-deoxyglucarate dehydratase of Rhodococcus jostii (strain RHA1).